The primary structure comprises 584 residues: 2-succinyl-5-enolpyruvyl-6-hydroxy-3-cyclohexene-1-carboxylate synthase (584 aa).

This sequence belongs to the TPP enzyme family. MenD subfamily. In terms of assembly, homodimer. Mg(2+) serves as cofactor. Mn(2+) is required as a cofactor. Requires thiamine diphosphate as cofactor.

It carries out the reaction isochorismate + 2-oxoglutarate + H(+) = 5-enolpyruvoyl-6-hydroxy-2-succinyl-cyclohex-3-ene-1-carboxylate + CO2. The protein operates within quinol/quinone metabolism; 1,4-dihydroxy-2-naphthoate biosynthesis; 1,4-dihydroxy-2-naphthoate from chorismate: step 2/7. Its pathway is quinol/quinone metabolism; menaquinone biosynthesis. In terms of biological role, catalyzes the thiamine diphosphate-dependent decarboxylation of 2-oxoglutarate and the subsequent addition of the resulting succinic semialdehyde-thiamine pyrophosphate anion to isochorismate to yield 2-succinyl-5-enolpyruvyl-6-hydroxy-3-cyclohexene-1-carboxylate (SEPHCHC). This is 2-succinyl-5-enolpyruvyl-6-hydroxy-3-cyclohexene-1-carboxylate synthase from Bacillus thuringiensis subsp. konkukian (strain 97-27).